Reading from the N-terminus, the 113-residue chain is Cell cycle protein GpsB (113 aa).

Residues 36–65 (IKDYETYAALVKSLRQEIADLKEELARKPQ) are a coiled coil. Positions 61 to 82 (ARKPQVSSAPSPSHPDPIDVAA) are disordered.

Belongs to the GpsB family. In terms of assembly, forms polymers through the coiled coil domains. Interacts with PBP1, MreC and EzrA.

Its subcellular location is the cytoplasm. In terms of biological role, divisome component that associates with the complex late in its assembly, after the Z-ring is formed, and is dependent on DivIC and PBP2B for its recruitment to the divisome. Together with EzrA, is a key component of the system that regulates PBP1 localization during cell cycle progression. Its main role could be the removal of PBP1 from the cell pole after pole maturation is completed. Also contributes to the recruitment of PBP1 to the division complex. Not essential for septum formation. This Streptococcus pneumoniae (strain Hungary19A-6) protein is Cell cycle protein GpsB.